We begin with the raw amino-acid sequence, 204 residues long: MKLLHLDASILGTGSVSRELSALIVRRLAGDAPDAVTYRDLVAENPPHLTVATLPGAHPVSAMAGPLDAAGQAVRDASDRMLSEFVAADTVVIGVPMYNFTIPSQLKAWIDRLLVPGTTFRYGAAGPEGLMGGKRVILALARGGFYGPGTASVPAEHAEHYLRTVFGFMGIVPELVLAEGLAAGEHNKAQALASARDAVGQLAA.

FMN-binding positions include Ser9, 15–17 (SVS), and 97–100 (MYNF).

The protein belongs to the azoreductase type 1 family. Homodimer. FMN serves as cofactor.

The enzyme catalyses 2 a quinone + NADH + H(+) = 2 a 1,4-benzosemiquinone + NAD(+). It catalyses the reaction N,N-dimethyl-1,4-phenylenediamine + anthranilate + 2 NAD(+) = 2-(4-dimethylaminophenyl)diazenylbenzoate + 2 NADH + 2 H(+). Functionally, quinone reductase that provides resistance to thiol-specific stress caused by electrophilic quinones. In terms of biological role, also exhibits azoreductase activity. Catalyzes the reductive cleavage of the azo bond in aromatic azo compounds to the corresponding amines. In Methylobacterium radiotolerans (strain ATCC 27329 / DSM 1819 / JCM 2831 / NBRC 15690 / NCIMB 10815 / 0-1), this protein is FMN-dependent NADH:quinone oxidoreductase.